We begin with the raw amino-acid sequence, 102 residues long: Large ribosomal subunit protein uL24 (102 aa).

It belongs to the universal ribosomal protein uL24 family. In terms of assembly, part of the 50S ribosomal subunit.

Functionally, one of two assembly initiator proteins, it binds directly to the 5'-end of the 23S rRNA, where it nucleates assembly of the 50S subunit. In terms of biological role, one of the proteins that surrounds the polypeptide exit tunnel on the outside of the subunit. This is Large ribosomal subunit protein uL24 from Cupriavidus pinatubonensis (strain JMP 134 / LMG 1197) (Cupriavidus necator (strain JMP 134)).